Here is a 282-residue protein sequence, read N- to C-terminus: Bifunctional protein FolD (282 aa).

NADP(+) is bound by residues 165–167 and S190; that span reads GRS.

The protein belongs to the tetrahydrofolate dehydrogenase/cyclohydrolase family. In terms of assembly, homodimer.

The catalysed reaction is (6R)-5,10-methylene-5,6,7,8-tetrahydrofolate + NADP(+) = (6R)-5,10-methenyltetrahydrofolate + NADPH. The enzyme catalyses (6R)-5,10-methenyltetrahydrofolate + H2O = (6R)-10-formyltetrahydrofolate + H(+). It participates in one-carbon metabolism; tetrahydrofolate interconversion. In terms of biological role, catalyzes the oxidation of 5,10-methylenetetrahydrofolate to 5,10-methenyltetrahydrofolate and then the hydrolysis of 5,10-methenyltetrahydrofolate to 10-formyltetrahydrofolate. This is Bifunctional protein FolD from Macrococcus caseolyticus (strain JCSC5402) (Macrococcoides caseolyticum).